Here is a 635-residue protein sequence, read N- to C-terminus: 1-deoxy-D-xylulose-5-phosphate synthase (635 aa).

Thiamine diphosphate is bound by residues histidine 72 and 113–115 (GHA). Aspartate 144 contributes to the Mg(2+) binding site. Residues 145–146 (GA), asparagine 174, tyrosine 287, and glutamate 370 contribute to the thiamine diphosphate site. Residue asparagine 174 participates in Mg(2+) binding.

Belongs to the transketolase family. DXPS subfamily. In terms of assembly, homodimer. The cofactor is Mg(2+). Thiamine diphosphate is required as a cofactor.

It catalyses the reaction D-glyceraldehyde 3-phosphate + pyruvate + H(+) = 1-deoxy-D-xylulose 5-phosphate + CO2. The protein operates within metabolic intermediate biosynthesis; 1-deoxy-D-xylulose 5-phosphate biosynthesis; 1-deoxy-D-xylulose 5-phosphate from D-glyceraldehyde 3-phosphate and pyruvate: step 1/1. In terms of biological role, catalyzes the acyloin condensation reaction between C atoms 2 and 3 of pyruvate and glyceraldehyde 3-phosphate to yield 1-deoxy-D-xylulose-5-phosphate (DXP). This is 1-deoxy-D-xylulose-5-phosphate synthase from Trichormus variabilis (strain ATCC 29413 / PCC 7937) (Anabaena variabilis).